A 307-amino-acid chain; its full sequence is Aspartate carbamoyltransferase catalytic subunit (307 aa).

The carbamoyl phosphate site is built by R54 and T55. L-aspartate is bound at residue K83. Residues R104, H132, and Q135 each coordinate carbamoyl phosphate. Positions 165 and 228 each coordinate L-aspartate. Residues L267 and P268 each contribute to the carbamoyl phosphate site.

It belongs to the aspartate/ornithine carbamoyltransferase superfamily. ATCase family. As to quaternary structure, heterododecamer (2C3:3R2) of six catalytic PyrB chains organized as two trimers (C3), and six regulatory PyrI chains organized as three dimers (R2).

The enzyme catalyses carbamoyl phosphate + L-aspartate = N-carbamoyl-L-aspartate + phosphate + H(+). The protein operates within pyrimidine metabolism; UMP biosynthesis via de novo pathway; (S)-dihydroorotate from bicarbonate: step 2/3. Functionally, catalyzes the condensation of carbamoyl phosphate and aspartate to form carbamoyl aspartate and inorganic phosphate, the committed step in the de novo pyrimidine nucleotide biosynthesis pathway. This chain is Aspartate carbamoyltransferase catalytic subunit, found in Clostridium botulinum (strain Eklund 17B / Type B).